The primary structure comprises 195 residues: MIDNNKHNQDINASSANTIKKDELSESACKIDSIIDPKDDQIIQLQIQLAQIKEHERNTILRLKAEIENIQRRNIQEIEKAHKFALDRFVSELLPVIDNLERTLGIIDRSNTTLSAIIEGIDLTLKSFLDTVYKFGVKSIHEIHIPFNPEIHQAISTMESEKYESNQVLTIVQKGYSLNGRLVRPAMVIVAKSKS.

This sequence belongs to the GrpE family. In terms of assembly, homodimer.

It localises to the cytoplasm. In terms of biological role, participates actively in the response to hyperosmotic and heat shock by preventing the aggregation of stress-denatured proteins, in association with DnaK and GrpE. It is the nucleotide exchange factor for DnaK and may function as a thermosensor. Unfolded proteins bind initially to DnaJ; upon interaction with the DnaJ-bound protein, DnaK hydrolyzes its bound ATP, resulting in the formation of a stable complex. GrpE releases ADP from DnaK; ATP binding to DnaK triggers the release of the substrate protein, thus completing the reaction cycle. Several rounds of ATP-dependent interactions between DnaJ, DnaK and GrpE are required for fully efficient folding. This is Protein GrpE from Blochmanniella floridana.